The chain runs to 400 residues: tRNA pseudouridine synthase Pus10 (400 aa).

Positions 77–194 (QVYVELFGSP…DGSVSVQPRR (118 aa)) constitute a THUMP domain. Tyr301 contacts substrate.

It belongs to the pseudouridine synthase Pus10 family.

The catalysed reaction is uridine(54) in tRNA = pseudouridine(54) in tRNA. It catalyses the reaction uridine(55) in tRNA = pseudouridine(55) in tRNA. In terms of biological role, responsible for synthesis of pseudouridine from uracil-54 and uracil-55 in the psi GC loop of transfer RNAs. This chain is tRNA pseudouridine synthase Pus10, found in Acidilobus saccharovorans (strain DSM 16705 / JCM 18335 / VKM B-2471 / 345-15).